The chain runs to 250 residues: MAVTKLVLVRHGESQWNNENRFTGWYDVDLSEKGRSEAKAAGKLLKDEGFTFDFAYTSVLKRAIHTLWNILDELDQAWLPTEKTWKLNERHYGALQGLNKSETAEKYGDEQVKQWRRGFAITPPALEKSDERFPGHDPRYAKLTDAELPTTESLALTIERVIPYWNDVIKPRIASGERVIIAAHGNSLRALVKYLDDLGEDEILELNIPTGVPLVYEFDENFKPIKHYYLGNADEIAAKAAAVANQGKAK.

Residues 10 to 17 (RHGESQWN), 23 to 24 (TG), Arg-62, 89 to 92 (ERHY), Lys-100, 116 to 117 (RR), and 185 to 186 (GN) contribute to the substrate site. His-11 acts as the Tele-phosphohistidine intermediate in catalysis. The Proton donor/acceptor role is filled by Glu-89.

The protein belongs to the phosphoglycerate mutase family. BPG-dependent PGAM subfamily. Homodimer.

It catalyses the reaction (2R)-2-phosphoglycerate = (2R)-3-phosphoglycerate. Its pathway is carbohydrate degradation; glycolysis; pyruvate from D-glyceraldehyde 3-phosphate: step 3/5. Its function is as follows. Catalyzes the interconversion of 2-phosphoglycerate and 3-phosphoglycerate. This is 2,3-bisphosphoglycerate-dependent phosphoglycerate mutase from Yersinia pseudotuberculosis serotype IB (strain PB1/+).